The chain runs to 176 residues: MSITIPYDGSISREPSPSPPPPKANTKNLPTKILSNFLIGLIMIPVAITAFIFILTSLGFTFFFAFYWFLQRNYRHRLRRHRRHEYSDGLSPRCVKRLPQFKYCEPSSEYGGDDCVVCIDGFRQGQWCRKLPRCGHVFHRKCVDLWLIKVSTCPICRDRVYRFEEGRRWRPQGEIF.

The segment at 1-26 (MSITIPYDGSISREPSPSPPPPKANT) is disordered. A helical transmembrane segment spans residues 37-57 (FLIGLIMIPVAITAFIFILTS). Residues 115 to 157 (CVVCIDGFRQGQWCRKLPRCGHVFHRKCVDLWLIKVSTCPICR) form an RING-type; atypical zinc finger.

Belongs to the RING-type zinc finger family. ATL subfamily.

It is found in the membrane. It catalyses the reaction S-ubiquitinyl-[E2 ubiquitin-conjugating enzyme]-L-cysteine + [acceptor protein]-L-lysine = [E2 ubiquitin-conjugating enzyme]-L-cysteine + N(6)-ubiquitinyl-[acceptor protein]-L-lysine.. It participates in protein modification; protein ubiquitination. The protein is RING-H2 finger protein ATL14 (ATL14) of Arabidopsis thaliana (Mouse-ear cress).